Consider the following 393-residue polypeptide: Glycocyamine kinase (393 aa).

A Phosphagen kinase N-terminal domain is found at 7–94; the sequence is REKFAKENFP…FDRVIEEIHH (88 aa). A Phosphagen kinase C-terminal domain is found at 120-362; the sequence is YVKSCRIRCG…NVLIEADKRL (243 aa). Residues 123-127, His186, Arg231, 287-291, 315-320, and Asp330 each bind ATP; these read SCRIR, RASVH, and RGTGGE. The tract at residues 367–393 is disordered; the sequence is PIDDLTPRLNSSTGTSISATASRHMTL. Residues 377–393 are compositionally biased toward low complexity; that stretch reads SSTGTSISATASRHMTL.

It belongs to the ATP:guanido phosphotransferase family. As to quaternary structure, monomer.

The catalysed reaction is guanidinoacetate + ATP = phosphoguanidinoacetate + ADP + H(+). The polypeptide is Glycocyamine kinase (Hediste diversicolor (Sandworm)).